The primary structure comprises 82 residues: RNA-binding protein Hfq (82 aa).

In terms of domain architecture, Sm spans 10 to 70; the sequence is DLFLNTVRKS…ISTIMPSQPV (61 aa).

This sequence belongs to the Hfq family. Homohexamer.

RNA chaperone that binds small regulatory RNA (sRNAs) and mRNAs to facilitate mRNA translational regulation in response to envelope stress, environmental stress and changes in metabolite concentrations. Also binds with high specificity to tRNAs. The sequence is that of RNA-binding protein Hfq from Chelativorans sp. (strain BNC1).